We begin with the raw amino-acid sequence, 1026 residues long: Vacuolar protein sorting-associated protein 18 homolog (1026 aa).

Positions 858-896 (IVDFLKRNKQRLEKLERSMKEATEIASEIRDKQEKLKNR) form a coiled coil. An RING-type; degenerate zinc finger spans residues 906–932 (CSHCARPISGRAFNVHSCRHFFHRECL).

In terms of assembly, probable core component of at least two putative endosomal tethering complexes, the homotypic fusion and vacuole protein sorting (HOPS) complex and the class C core vacuole/endosome tethering (CORVET) complex. Their common core is composed of the class C Vps proteins vps-11, vps-16 and vps-18, which in HOPS further associates with vps-33.1, vps-39 and vps-41 and in CORVET with vps-8 and vps-33.2. In terms of tissue distribution, in hermaphrodites, expressed in coelomocytes and gonadal sheath cells.

Its subcellular location is the cytoplasm. It is found in the late endosome membrane. It localises to the lysosome membrane. The protein localises to the early endosome. The protein resides in the cytoplasmic vesicle. Its subcellular location is the autophagosome. It is found in the clathrin-coated vesicle. In terms of biological role, plays a role in vesicle-mediated protein trafficking to lysosomal compartments including the endocytic membrane transport and autophagic pathways. Believed to act as a core component of the putative HOPS and CORVET endosomal tethering complexes which are proposed to be involved in the rab-5-to-rab-7 endosome conversion probably implicating sand-1, and via binding SNAREs and SNARE complexes to mediate tethering and docking events during SNARE-mediated membrane fusion. The HOPS complex is proposed to be recruited to rab-7 on the late endosomal membrane and to regulate late endocytic, phagocytic and autophagic traffic towards lysosomes. Within the HOPS complex, contributes to the normal development of gut granules in intestinal cells of the embryo, and also promotes the trafficking of embryonic intestinal gut granules away from lysosomes. The CORVET complex is proposed to function as a rab-5 effector to mediate early endosome fusion probably in specific endosome subpopulations. Required for fusion of endosomes and autophagosomes with lysosomes. Plays a role in the degradation of apoptotic cells during programmed cell death. This is Vacuolar protein sorting-associated protein 18 homolog from Caenorhabditis elegans.